Here is a 338-residue protein sequence, read N- to C-terminus: Tagatose 1,6-diphosphate aldolase (338 aa).

This sequence belongs to the aldolase LacD family.

It carries out the reaction D-tagatofuranose 1,6-bisphosphate = D-glyceraldehyde 3-phosphate + dihydroxyacetone phosphate. Its pathway is carbohydrate metabolism; D-tagatose 6-phosphate degradation; D-glyceraldehyde 3-phosphate and glycerone phosphate from D-tagatose 6-phosphate: step 2/2. The protein is Tagatose 1,6-diphosphate aldolase of Listeria monocytogenes serotype 4a (strain HCC23).